We begin with the raw amino-acid sequence, 487 residues long: Serine/threonine-protein kinase 4 (487 aa).

N-acetylmethionine is present on Met1. Thr3 bears the Phosphothreonine mark. The Protein kinase domain maps to 30–281; sequence FDVLEKLGEG…ATQLLQHPFV (252 aa). Residues 36-44 and Lys59 contribute to the ATP site; that span reads LGEGSYGSV. Asp149 functions as the Proton acceptor in the catalytic mechanism. Thr183 is subject to Phosphothreonine; by autocatalysis. Ser265 is subject to Phosphoserine. Residues 290-310 adopt a coiled-coil conformation; sequence LRDLINEAMDVKLKRQEAQQR. The interval 305–338 is disordered; sequence QEAQQREVDQDDEENSEEDELDSGTMVRAVGDDM. Positions 313 to 326 are enriched in acidic residues; that stretch reads DQDDEENSEEDELD. A Phosphoserine modification is found at Ser320. Residues Thr340 and Thr367 each carry the phosphothreonine modification. Thr387 is modified (phosphothreonine; by PKB/AKT1). Phosphoserine is present on residues Ser410 and Ser414. At Tyr433 the chain carries Phosphotyrosine. The SARAH domain maps to 433–480; sequence YEFLKSWTVEDLQKRLLALDPMMEQEIEEIRQKYQSKRQPILDAIEAK.

This sequence belongs to the protein kinase superfamily. STE Ser/Thr protein kinase family. STE20 subfamily. Homodimer; mediated via the coiled-coil region. Interacts with NORE1, which inhibits autoactivation. Interacts with and stabilizes SAV1. Interacts with RASSF1. Interacts with FOXO3. Interacts with RASSF2 (via SARAH domain). Interacts with AR, PKB/AKT1, TNNI3 and SIRT1. Interacts with DLG5 (via PDZ domain 3). Interacts with MARK3 and SCRIB in the presence of DLG5. The cofactor is Mg(2+). Autophosphorylated on serine and threonine residues. Phosphorylation at Thr-387 by PKB/AKT1, leads to inhibition of its: kinase activity, nuclear translocation and autophosphorylation at Thr-183. It also diminishes its cleavage by caspases and its ability to phosphorylate FOXO3. Post-translationally, proteolytically cleaved by caspase-3 during apoptosis at Asp-326 and Asp-349 resulting in a 37 kDa or a 39 kDa subunit respectively. The 39 kDa subunit is further cleaved into the 37 kDa form. Proteolytic cleavage results in kinase activation and nuclear translocation of the truncated form (MST1/N). It is less likely that cleavage at Asp-349 is a prerequisite for activation as this site is not conserved in the murine ortholog.

It localises to the cytoplasm. The protein resides in the nucleus. The catalysed reaction is L-seryl-[protein] + ATP = O-phospho-L-seryl-[protein] + ADP + H(+). It carries out the reaction L-threonyl-[protein] + ATP = O-phospho-L-threonyl-[protein] + ADP + H(+). With respect to regulation, inhibited by the C-terminal non-catalytic region. Activated by caspase-cleavage. Full activation also requires homodimerization and autophosphorylation of Thr-183. Activated by RASSF1 which acts by preventing its dephosphorylation. In terms of biological role, stress-activated, pro-apoptotic kinase which, following caspase-cleavage, enters the nucleus and induces chromatin condensation followed by internucleosomal DNA fragmentation. Key component of the Hippo signaling pathway which plays a pivotal role in organ size control and tumor suppression by restricting proliferation and promoting apoptosis. The core of this pathway is composed of a kinase cascade wherein STK3/MST2 and STK4/MST1, in complex with its regulatory protein SAV1, phosphorylates and activates LATS1/2 in complex with its regulatory protein MOB1, which in turn phosphorylates and inactivates YAP1 oncoprotein and WWTR1/TAZ. Phosphorylation of YAP1 by LATS2 inhibits its translocation into the nucleus to regulate cellular genes important for cell proliferation, cell death, and cell migration. STK3/MST2 and STK4/MST1 are required to repress proliferation of mature hepatocytes, to prevent activation of facultative adult liver stem cells (oval cells), and to inhibit tumor formation. Phosphorylates 'Ser-14' of histone H2B (H2BS14ph) during apoptosis. Phosphorylates FOXO3 upon oxidative stress, which results in its nuclear translocation and cell death initiation. Phosphorylates MOBKL1A, MOBKL1B and RASSF2. Phosphorylates TNNI3 (cardiac Tn-I) and alters its binding affinity to TNNC1 (cardiac Tn-C) and TNNT2 (cardiac Tn-T). Phosphorylates FOXO1 on 'Ser-212' and regulates its activation and stimulates transcription of PMAIP1 in a FOXO1-dependent manner. Phosphorylates SIRT1 and inhibits SIRT1-mediated p53/TP53 deacetylation, thereby promoting p53/TP53 dependent transcription and apoptosis upon DNA damage. Acts as an inhibitor of PKB/AKT1. Phosphorylates AR on 'Ser-650' and suppresses its activity by intersecting with PKB/AKT1 signaling and antagonizing formation of AR-chromatin complexes. The polypeptide is Serine/threonine-protein kinase 4 (STK4) (Lemur catta (Ring-tailed lemur)).